The following is a 409-amino-acid chain: MARINRQTAYQKAQEIEFSTSSADPLAAWRISGIKGTAWEQWYFDSIADDGKSGIVLTMARDASYTVLGRGVLRVELDVTFEDGSHHNHVDWMNEAIVEDRSSPKSTGTIDGVWTAPGKSIRFQIAADGSAAKVEVDTPETKGHFTLAALSPPMYPNGETQNELESQGKVASTELLPKIHLVQVIPTATFEGDLMVNGRLLRFRGIGGHMHAWAQGAWFDTTLGWKVARGVAGPFSVTLMEYTDMEGIVHSSGYVVEDGVKRFGGLETYATPRSSATSQQVLKYRDEDRKGKQTVRWTPTYNTGFAGRFGDSSTGAILQFSSADSGETYRFELTHRRKAFEFLFGSSDSGLTAFLGEIKGGKIGSEVYEGVQASNVCVLPQGWTKIYFFICMLLAVVTFGYINILETNT.

Residues 386–406 (IYFFICMLLAVVTFGYINILE) form a helical membrane-spanning segment.

Belongs to the Diels-Alderase family.

The protein localises to the membrane. It participates in mycotoxin biosynthesis. Diels-Alderase; part of the gene cluster that mediates the biosynthesis of UCS1025A, a member of the pyrrolizidinone family that acts as a strong telomerase inhibitor and displays potent antibacterial and antitumor properties. These compounds share a hemiaminal-containing pyrrolizidinone core fused with a gamma-lactone, giving a furopyrrolizidine that is connected to a decalin fragment. The polyketide synthase module (PKS) of the PKS-NRPS ucsA is responsible for the synthesis of the polyketide backbone via the condensation of an acetyl-CoA starter unit with 6 malonyl-CoA units. The downstream nonribosomal peptide synthetase (NRPS) module then amidates the carboxyl end of the polyketide with a 2S,3S-methylproline derived from L-isoleucine by the 2-oxoglutarate-dependent dioxygenase ucsF which converts L-isoleucine to (4S,5S)-4-methylpyrroline-5-carboxylate that is further converted to 2S,3S-methylproline by the pyrroline-5-carboxylate reductase ucsG. Reductive release of the completed aminoacyl polyketide from the assembly line can form the 3-pyrrolin-2-one structure via an intramolecular Knoevenagel reaction. Because ucsA lacks a designated enoylreductase (ER) domain, the required activity is provided the enoyl reductase ucsL. This keto acyclic precursor is the substrate of the Diels-Alderase ucsH, that catalyzes the Diels-Alder cycloaddition. Oxidation of the 3S-methyl group to a carboxylate by the cytochrome P450 monooxygenase ucsK allows an oxa-Michael cyclization that might involve the reductase/dehydrogenase ucsI and which furnishes the furopyrrolizidine. The oxidase ucsJ likely plays a critical role in stereoselective reduction of the C5-C6 double bond to afford the required R-configured carboxylate group. Further enolization and oxidation at C5 by an unidentified enzyme affords the last intermediate that can undergo oxa-Michael cyclization to yield UCS1025A. The polypeptide is Diels-Alderase ucsH (Acremonium sp).